Here is a 159-residue protein sequence, read N- to C-terminus: 2-C-methyl-D-erythritol 2,4-cyclodiphosphate synthase (159 aa).

The a divalent metal cation site is built by aspartate 8 and histidine 10. 4-CDP-2-C-methyl-D-erythritol 2-phosphate-binding positions include 8-10 (DVH) and 34-35 (HS). Residue histidine 42 participates in a divalent metal cation binding. 4-CDP-2-C-methyl-D-erythritol 2-phosphate-binding positions include 56-58 (DIG), 61-65 (FPDTD), 100-106 (AQAPKML), 132-135 (TTTE), phenylalanine 139, and arginine 142.

The protein belongs to the IspF family. In terms of assembly, homotrimer. Requires a divalent metal cation as cofactor.

The catalysed reaction is 4-CDP-2-C-methyl-D-erythritol 2-phosphate = 2-C-methyl-D-erythritol 2,4-cyclic diphosphate + CMP. It functions in the pathway isoprenoid biosynthesis; isopentenyl diphosphate biosynthesis via DXP pathway; isopentenyl diphosphate from 1-deoxy-D-xylulose 5-phosphate: step 4/6. Functionally, involved in the biosynthesis of isopentenyl diphosphate (IPP) and dimethylallyl diphosphate (DMAPP), two major building blocks of isoprenoid compounds. Catalyzes the conversion of 4-diphosphocytidyl-2-C-methyl-D-erythritol 2-phosphate (CDP-ME2P) to 2-C-methyl-D-erythritol 2,4-cyclodiphosphate (ME-CPP) with a corresponding release of cytidine 5-monophosphate (CMP). This chain is 2-C-methyl-D-erythritol 2,4-cyclodiphosphate synthase, found in Klebsiella pneumoniae (strain 342).